Reading from the N-terminus, the 352-residue chain is NADP-dependent oxidoreductase RED1 (352 aa).

NADP(+)-binding positions include 166-169, lysine 192, tyrosine 208, asparagine 231, and 285-287; these read GAVG and FIV.

It belongs to the NADP-dependent oxidoreductase L4BD family.

The protein operates within mycotoxin biosynthesis. In terms of biological role, NADP-dependent oxidoreductase; part of the Tox1B locus, one of the 2 loci that mediate the biosynthesis of T-toxin, a family of linear polyketides 37 to 45 carbons in length, of which the major component is 41 carbons, and which leads to high virulence to maize. One of the PKSs (PKS1 or PKS2) could synthesize a precursor, used subsequently by the other PKS as starter unit, to add additional carbons. Variability in the length of the final carbon backbone C35-47 could be achieved by varying the number of condensation cycles, or use of different starter or extender units or might be due to decarboxylation of the penultimate product, catalyzed by DEC1. Additional proteins are required for the biosynthesis of T-toxin, including oxidoreductases RED1, RED2, RED3, LAM1 and OXI1, as well as esterase TOX9. This Cochliobolus heterostrophus (strain C4 / ATCC 48331 / race T) (Southern corn leaf blight fungus) protein is NADP-dependent oxidoreductase RED1.